Consider the following 886-residue polypeptide: Vam6/Vps39-like protein (886 aa).

The 280-residue stretch at 15–294 (PLQIDCLAAW…RFITSGGSNI (280 aa)) folds into the CNH domain. The CHCR repeat unit spans residues 573 to 750 (FTEDLPEVES…LLRMYLSPPS (178 aa)).

It belongs to the VAM6/VPS39 family. As to quaternary structure, homooligomer. Interacts with TGFBR2 and, less efficiently, with TGFBR1; interaction with TGFBR2 is independent of the receptor kinase activity and of the presence of TGF-beta. Also interacts with ACVR2B, but not with BMPR2. Interacts with SMAD4, preferentially following TGF-beta treatment. Component of the putative homotypic fusion and vacuole protein sorting (HOPS) complex; the core of which composed of the class C Vps proteins VPS11, VPS16, VPS18 and VPS33A, is associated with VPS39 and VPS41. Interacts with PLEKHM2; involved in VPS39 recruitment to ARL8B-containing lysosomes. Associates with adapter protein complex 3 (AP-3) and clathrin:AP-3 complexes. Interacts with STX17; this interaction is increased in the absence of TMEM39A. Interacts with RAB7, RAB2A and RAB2B. Interacts with RAB2A (GTP-bound); the interaction contributes to obtaining a functional HOPS complex that promotes autophagosome-lysosome membrane fusion driven by STX17-SNAP29-VAMP8. Interacts with RAB39A (GTP-bound) and RAB39B (GTP-bound); interaction with RAB39A contributes to obtaining a functional HOPS complex.

The protein resides in the cytoplasm. It is found in the lysosome membrane. It localises to the late endosome membrane. Regulator of TGF-beta/activin signaling, inhibiting SMAD3- and activating SMAD2-dependent transcription. Acts by interfering with SMAD3/SMAD4 complex formation, this would lead to inhibition of SMAD3-dependent transcription and relieve SMAD3 inhibition of SMAD2-dependent promoters, thus increasing SMAD2-dependent transcription. In terms of biological role, plays a role in vesicle-mediated protein trafficking to lysosomal compartments including the endocytic membrane transport and autophagic pathways. Acts as a component of the HOPS endosomal tethering complex which is proposed to be involved in the Rab5-to-Rab7 endosome conversion probably implicating MON1A/B, and via binding SNAREs and SNARE complexes to mediate tethering and docking events during SNARE-mediated membrane fusion. The HOPS complex is proposed to be recruited to Rab7 on the late endosomal membrane and to regulate late endocytic, phagocytic and autophagic traffic towards lysosomes. Involved in homotypic vesicle fusions between late endosomes and in heterotypic fusions between late endosomes and lysosomes. Required for fusion of endosomes and autophagosomes with lysosomes. This chain is Vam6/Vps39-like protein, found in Mus musculus (Mouse).